Consider the following 159-residue polypeptide: Ecotin (159 aa).

The signal sequence occupies residues 1-22; it reads MRPTPLSTILALTMAATAPAMA. Cysteines 68 and 105 form a disulfide.

This sequence belongs to the protease inhibitor I11 (ecotin) family. As to quaternary structure, homodimer.

It localises to the periplasm. Functionally, general inhibitor of family S1 serine proteases. The sequence is that of Ecotin from Pseudomonas putida (strain W619).